The sequence spans 364 residues: GDP-perosamine synthase (364 aa).

At Lys-183 the chain carries N6-(pyridoxal phosphate)lysine.

Belongs to the DegT/DnrJ/EryC1 family. In terms of assembly, homodecamer. It depends on pyridoxal 5'-phosphate as a cofactor.

It carries out the reaction GDP-alpha-D-perosamine + 2-oxoglutarate = GDP-4-dehydro-alpha-D-rhamnose + L-glutamate. Its pathway is bacterial outer membrane biogenesis; LPS O-antigen biosynthesis. Its activity is regulated as follows. Divalent ions have no significant effect on activity. In terms of biological role, catalyzes the synthesis of GDP-perosamine from GDP-4-keto-6-deoxy-D-mannose and L-glutamate. Can use only L-glutamate as amino donor. The sequence is that of GDP-perosamine synthase from Escherichia coli O157:H7.